The chain runs to 76 residues: Sec-independent protein translocase protein TatA (76 aa).

Residues 1–21 (MGGLSIWHWLIVLLIVALVFG) traverse the membrane as a helical segment. Positions 40 to 76 (KDGMKEGETPADAQQLPRSGAVDVNAKETTRSDSNKA) are disordered. Residues 64-76 (NAKETTRSDSNKA) are compositionally biased toward basic and acidic residues.

Belongs to the TatA/E family. As to quaternary structure, the Tat system comprises two distinct complexes: a TatABC complex, containing multiple copies of TatA, TatB and TatC subunits, and a separate TatA complex, containing only TatA subunits. Substrates initially bind to the TatABC complex, which probably triggers association of the separate TatA complex to form the active translocon.

The protein resides in the cell inner membrane. Part of the twin-arginine translocation (Tat) system that transports large folded proteins containing a characteristic twin-arginine motif in their signal peptide across membranes. TatA could form the protein-conducting channel of the Tat system. The sequence is that of Sec-independent protein translocase protein TatA from Burkholderia cenocepacia (strain HI2424).